The primary structure comprises 131 residues: NADPH-dependent 7-cyano-7-deazaguanine reductase (131 aa).

C48 functions as the Thioimide intermediate in the catalytic mechanism. The active-site Proton donor is D55. Substrate is bound by residues 70–72 (VEL) and 89–90 (QE).

It belongs to the GTP cyclohydrolase I family. QueF type 1 subfamily.

The protein localises to the cytoplasm. The enzyme catalyses 7-aminomethyl-7-carbaguanine + 2 NADP(+) = 7-cyano-7-deazaguanine + 2 NADPH + 3 H(+). The protein operates within tRNA modification; tRNA-queuosine biosynthesis. In terms of biological role, catalyzes the NADPH-dependent reduction of 7-cyano-7-deazaguanine (preQ0) to 7-aminomethyl-7-deazaguanine (preQ1). This Caldicellulosiruptor bescii (strain ATCC BAA-1888 / DSM 6725 / KCTC 15123 / Z-1320) (Anaerocellum thermophilum) protein is NADPH-dependent 7-cyano-7-deazaguanine reductase.